Here is a 356-residue protein sequence, read N- to C-terminus: UDP-N-acetylglucosamine--N-acetylmuramyl-(pentapeptide) pyrophosphoryl-undecaprenol N-acetylglucosamine transferase (356 aa).

Residues 11 to 13 (TGG), N117, R160, S188, and Q290 each bind UDP-N-acetyl-alpha-D-glucosamine.

Belongs to the glycosyltransferase 28 family. MurG subfamily.

The protein resides in the cell inner membrane. The catalysed reaction is di-trans,octa-cis-undecaprenyl diphospho-N-acetyl-alpha-D-muramoyl-L-alanyl-D-glutamyl-meso-2,6-diaminopimeloyl-D-alanyl-D-alanine + UDP-N-acetyl-alpha-D-glucosamine = di-trans,octa-cis-undecaprenyl diphospho-[N-acetyl-alpha-D-glucosaminyl-(1-&gt;4)]-N-acetyl-alpha-D-muramoyl-L-alanyl-D-glutamyl-meso-2,6-diaminopimeloyl-D-alanyl-D-alanine + UDP + H(+). It participates in cell wall biogenesis; peptidoglycan biosynthesis. Its function is as follows. Cell wall formation. Catalyzes the transfer of a GlcNAc subunit on undecaprenyl-pyrophosphoryl-MurNAc-pentapeptide (lipid intermediate I) to form undecaprenyl-pyrophosphoryl-MurNAc-(pentapeptide)GlcNAc (lipid intermediate II). This chain is UDP-N-acetylglucosamine--N-acetylmuramyl-(pentapeptide) pyrophosphoryl-undecaprenol N-acetylglucosamine transferase, found in Rickettsia bellii (strain RML369-C).